A 438-amino-acid chain; its full sequence is Enolase (438 aa).

Substrate is bound by residues His159 and Glu168. Glu211 (proton donor) is an active-site residue. Asp246, Glu297, and Asp322 together coordinate Mg(2+). Residues Glu297 and Asp322 each contribute to the substrate site. Lys347 acts as the Proton acceptor in catalysis. Substrate contacts are provided by residues 374 to 377 (SHRS) and Lys398.

The protein belongs to the enolase family. Homodimer. Mg(2+) serves as cofactor.

It is found in the cytoplasm. The enzyme catalyses (2R)-2-phosphoglycerate = phosphoenolpyruvate + H2O. The protein operates within carbohydrate degradation; glycolysis; pyruvate from D-glyceraldehyde 3-phosphate: step 4/5. This chain is Enolase (enoA), found in Penicillium chrysogenum (Penicillium notatum).